The chain runs to 599 residues: MSGFHNVGNINMMAQQQMQQNRIKISVRNWQNATMNDLINFISRNARVAVYDAHVEGPLVIGYVNSKAEAESLMKWNGVRFAGSNLKFELLDNNGASAGTSDTISFLRGVLLKRYDPQTKLLNLGALHSDPELIQKGVFSSISTQSKMFPAMMKLASTEKSLIVESVNLADNQLKDISAISTLAQTFPNLKNLCLANNQIFRFRSLEVWKNKFKDLRELLMTNNPITTDKLYRTEMLRLFPKLVVLDNVIVRDEQKLQTVYSLPMKIQQFFFENDALGQSSTDFATNFLNLWDNNREQLLNLYSPQSQFSVSVDSTIPPSTVTDSDQTPAFGYYMSSSRNISKVSSEKSIQQRLSIGQESINSIFKTLPKTKHHLQEQPNEYSMETISYPQINGFVITLHGFFEETGKPELESNKKTGKNNYQKNRRYNHGYNSTSNNKLSKKSFDRTWVIVPMNNSVIIASDLLTVRAYSTGAWKTASIAIAQPPQQQASVLPQVASMNPNITTPPQPQPSVVPGGMSIPGAPQGAMVMAPTLQLPPDVQSRLNPVQLELLNKLHLETKLNAEYTFMLAEQSNWNYEVAIKGFQSSMNGIPREAFVQF.

Ser-2 carries the N-acetylserine modification. 2 LRR repeats span residues 163 to 184 and 189 to 210; these read IVES…STLA and NLKN…EVWK. The region spanning 224–262 is the LRRCT domain; that stretch reads NPITTDKLYRTEMLRLFPKLVVLDNVIVRDEQKLQTVYS. Residues 280-467 form the NTF2 domain; the sequence is SSTDFATNFL…VIIASDLLTV (188 aa). Positions 408-439 are disordered; the sequence is KPELESNKKTGKNNYQKNRRYNHGYNSTSNNK. The 54-residue stretch at 546-599 folds into the TAP-C domain; that stretch reads PVQLELLNKLHLETKLNAEYTFMLAEQSNWNYEVAIKGFQSSMNGIPREAFVQF.

It belongs to the NXF family. As to quaternary structure, interacts with nucleoporin complex NUP84 and MTR2. Interacts with MIP6.

Its subcellular location is the nucleus. It is found in the cytoplasm. Functionally, involved in the export of mRNA from the nucleus to the cytoplasm. This chain is mRNA export factor MEX67 (MEX67), found in Saccharomyces cerevisiae (strain ATCC 204508 / S288c) (Baker's yeast).